We begin with the raw amino-acid sequence, 119 residues long: C-X-C motif chemokine 17 (119 aa).

The signal sequence occupies residues 1–21; the sequence is MKVLISSLLLLLPLMLMSMVS. 2 disulfides stabilise this stretch: Cys-75/Cys-103 and Cys-77/Cys-110. Residues 81 to 100 form a disordered region; it reads KGNVKKTRHQRHHRKPNKHS. Positions 82 to 100 are enriched in basic residues; the sequence is GNVKKTRHQRHHRKPNKHS.

Belongs to the intercrine alpha (chemokine CxC) family. In terms of processing, likely to undergo an endoproteolytic process to form a four-cysteine-containing mature peptide with a canonical CXC chemokine scaffold after secretion. Detected in trachea, stomach, lung and skeletal muscle. Detected in intestine and in normal and asthmatic lung (at protein level). Breast tumors showed 3- to 24-fold up-regulation.

The protein resides in the secreted. Functionally, chemokine that acts as a chemoattractant for monocytes, macrophages and dendritic cells. Plays a role in angiogenesis and possibly in the development of tumors. Acts as an anti-inflammatory in the stomach. May play a role in the innate defense against infections. Activates the C-X-C chemokine receptor GPR35 to induce a rapid and transient rise in the level of intracellular calcium ions. In terms of biological role, seems to exhibit much higher chemoattractant potency on monocytes and macrophages than 6-Cys CXCL17. The protein is C-X-C motif chemokine 17 (CXCL17) of Homo sapiens (Human).